Here is a 508-residue protein sequence, read N- to C-terminus: ATP synthase subunit alpha, chloroplastic (508 aa).

Position 170-177 (170-177 (GDRQTGKT)) interacts with ATP.

This sequence belongs to the ATPase alpha/beta chains family. As to quaternary structure, F-type ATPases have 2 components, F(1) - the catalytic core - and F(0) - the membrane proton channel. F(1) has five subunits: alpha(3), beta(3), gamma(1), delta(1), epsilon(1). F(0) has four main subunits: a(1), b(1), b'(1) and c(10-14). The alpha and beta chains form an alternating ring which encloses part of the gamma chain. F(1) is attached to F(0) by a central stalk formed by the gamma and epsilon chains, while a peripheral stalk is formed by the delta, b and b' chains.

It localises to the plastid. The protein localises to the chloroplast thylakoid membrane. It carries out the reaction ATP + H2O + 4 H(+)(in) = ADP + phosphate + 5 H(+)(out). Functionally, f(1)F(0) ATP synthase produces ATP from ADP in the presence of a proton or sodium gradient. F-type ATPases consist of two structural domains, F(1) containing the extramembraneous catalytic core and F(0) containing the membrane proton channel, linked together by a central stalk and a peripheral stalk. During catalysis, ATP synthesis in the catalytic domain of F(1) is coupled via a rotary mechanism of the central stalk subunits to proton translocation. In terms of biological role, the alpha chain is a regulatory subunit. The sequence is that of ATP synthase subunit alpha, chloroplastic from Chlamydomonas reinhardtii (Chlamydomonas smithii).